We begin with the raw amino-acid sequence, 592 residues long: MLRRALEEAIAQALKEMGVPARLKVARAPKDKPGDYGVPLFALAKELRKPPQAIAQELKDRLPLPEFVEEAIPVGGYLNFRLRTEALLREALRPKAPFPRRPGVVLVEHTSVNPNKELHVGHLRNIALGDAIARILAYAGREVLVLNYIDDTGRQAAETLFALRHYGLTWDGKEKYDHFAGRAYVRLHQDPEYERLQPAIEEVLHALERGELREEVNRILLAQMATMHALNARYDLLVWESDIVRAGLLQKALALLEQSPHVFRPREGKYAGALVMDASPVIPGLEDPFFVLLRSNGTATYYAKDIAFQFWKMGILEGLRFRPYENPYYPGLRTSAPEGEAYTPKAEETINVIDVRQSHPQALVRAALALAGYPALAEKAHHLAYETVLLEGRQMSGRKGLAVSVDEVLEEATRRARAIVEEKNPDHPDKEEAARMVALGAIRFSMVKTEPKKQIDFRYQEALSFEGDTGPYVQYAHARAHSILRKAGEWGAPDLSQATPYERALALDLLDFEEAVLEAAEEKTPHVLAQYLLDLAASWNAYYNARENGQPATPVLTAPEGLRELRLSLVQSLQRTLATGLDLLGIPAPEVM.

Positions 112-122 match the 'HIGH' region motif; sequence VNPNKELHVGH.

It belongs to the class-I aminoacyl-tRNA synthetase family. Monomer.

The protein localises to the cytoplasm. The enzyme catalyses tRNA(Arg) + L-arginine + ATP = L-arginyl-tRNA(Arg) + AMP + diphosphate. The chain is Arginine--tRNA ligase from Thermus thermophilus (strain ATCC BAA-163 / DSM 7039 / HB27).